The sequence spans 234 residues: MTKIAMANFKSAMPVFKSHAYLKELEKTLKPQHFDRVFVFPDFLGLLPNSFLHFTLGAQNAYPRDCGAFTGEITSKHLEELKIHTLLIGHSERRALLKESPSFLKEKFGFFKDKNFKIVYCIGEELTTREKGFRAVKEFLNEQLENIDLNYSNLIVAYEPIWAIGTKKSASLEDIYLTHGFLKQILNQKTPLLYGGSVNVQNAKEILGIDSVDGLLIGSASWELENFKTIISFL.

Residue Asn8 to Lys10 coordinates substrate. His90 (electrophile) is an active-site residue. The Proton acceptor role is filled by Glu159. Substrate contacts are provided by Gly165 and Ser197.

Belongs to the triosephosphate isomerase family. Homodimer.

It is found in the cytoplasm. The catalysed reaction is D-glyceraldehyde 3-phosphate = dihydroxyacetone phosphate. The protein operates within carbohydrate biosynthesis; gluconeogenesis. It functions in the pathway carbohydrate degradation; glycolysis; D-glyceraldehyde 3-phosphate from glycerone phosphate: step 1/1. Functionally, involved in the gluconeogenesis. Catalyzes stereospecifically the conversion of dihydroxyacetone phosphate (DHAP) to D-glyceraldehyde-3-phosphate (G3P). The protein is Triosephosphate isomerase of Helicobacter pylori (strain G27).